A 202-amino-acid polypeptide reads, in one-letter code: Large ribosomal subunit protein uL5 (202 aa).

Residues 1-17 (MSAKAATKNATKVAVKA) are compositionally biased toward low complexity. The interval 1 to 30 (MSAKAATKNATKVAVKAPEATTPVETKKSK) is disordered.

The protein belongs to the universal ribosomal protein uL5 family. Component of the large ribosomal subunit.

The protein localises to the nucleus. Its subcellular location is the cytoplasm. Component of the ribosome, a large ribonucleoprotein complex responsible for the synthesis of proteins in the cell. The small ribosomal subunit (SSU) binds messenger RNAs (mRNAs) and translates the encoded message by selecting cognate aminoacyl-transfer RNA (tRNA) molecules. The large subunit (LSU) contains the ribosomal catalytic site termed the peptidyl transferase center (PTC), which catalyzes the formation of peptide bonds, thereby polymerizing the amino acids delivered by tRNAs into a polypeptide chain. The nascent polypeptides leave the ribosome through a tunnel in the LSU and interact with protein factors that function in enzymatic processing, targeting, and the membrane insertion of nascent chains at the exit of the ribosomal tunnel. This is Large ribosomal subunit protein uL5 (rpl11) from Dictyostelium discoideum (Social amoeba).